A 236-amino-acid chain; its full sequence is CD81 antigen (236 aa).

Residues 1–12 (MGVEGCTKCIKY) lie on the Cytoplasmic side of the membrane. A helical transmembrane segment spans residues 13–33 (LLFVFNFVFWLAGGVILGVAL). Over 34–63 (WLRHDPQTTSLLYLELGNKPAPNTFYVGIY) the chain is Extracellular. A helical transmembrane segment spans residues 64–84 (ILIAVGAVMMFVGFLGCYGAI). The Cytoplasmic segment spans residues 85–89 (QESQC). A helical membrane pass occupies residues 90–112 (LLGTFFTCLVILFACEVAAGIWG). At 113 to 201 (FVNKDQIAKD…QKIDELFSGK (89 aa)) the chain is on the extracellular side. 2 cysteine pairs are disulfide-bonded: C156–C190 and C157–C175. A helical transmembrane segment spans residues 202 to 224 (LYLIGIAAIVVAVIMIFEMILSM). E219 provides a ligand contact to cholesterol. The Cytoplasmic segment spans residues 225–236 (VLCCGIRNSSVY).

This sequence belongs to the tetraspanin (TM4SF) family. In terms of assembly, homodimer. Part of a complex composed of CD19, CR2/CD21, CD81 and IFITM1/CD225 in the membrane of mature B cells. Interacts (via the second extracellular domain) with CD19; this interaction is initiated early during biosynthesis in the ER and enables trafficking of only properly folded CD19. Part of a complex that includes MHC class II/HLA-DR molecules and IFITM1. Interacts with IFITM1. Interacts with IFITM2 and IFITM3. Part of integrin-tetraspanin complex composed of CD9, CD81, beta-1 and beta-2 integrins in the membrane of monocyte/macrophages. Interacts (via the second extracellular domain) with integrin ITGAV:ITGB3. Interacts with CD247/CD3 zeta, ICAM1 and CD9 at the immune synapse on T cell membrane. Part of a GPCR-tetraspanin complex consisting at least of ADGRG1, CD81, possibly CD9, and GNA11 in which CD81 enhances the association of ADGRG1 with GNA11. Part of a complex composed of CD9, CD81, PTGFRN and IGSF8. Interacts directly with IGSF8. Interacts with CD53 and SCIMP. Interacts with SAMHD1 (via its C-terminus). Interacts with glypican GPC3 and with the transcriptional repressor HHEX; binding to GPC3 decreases the availability of free CD81 for binding to HHEX, resulting in nuclear translocation of HHEX and transcriptional repression. Interacts with CLDN1. Interacts with CLDN6 and CLDN9. Post-translationally, not glycosylated. In terms of processing, likely constitutively palmitoylated at low levels. Protein palmitoylation is up-regulated upon coligation of BCR and CD9-C2R-CD81 complexes in lipid rafts. In terms of tissue distribution, expressed in oocytes (at protein level). Highly expressed in granulosa cells. Expressed in skeletal muscle mainly in endothelial cells of endomysial capillaries, in satellite cells and myoblasts (at protein level). Expressed in hepatocytes (at protein level).

Its subcellular location is the cell membrane. The protein localises to the basolateral cell membrane. Structural component of specialized membrane microdomains known as tetraspanin-enriched microdomains (TERMs), which act as platforms for receptor clustering and signaling. Essential for trafficking and compartmentalization of CD19 receptor on the cell surface of activated B cells. Upon initial encounter with a microbial pathogen, enables the assembly of CD19-CR2 and B cell receptor complexes at signaling TERMs, lowering the threshold dose of antigen required to trigger B cell clonal expansion and humoral immune response. In T cells, associates with CD4 or CD8 coreceptors and defines the maturation state of antigen-induced synapses with B cells. Facilitates localization of CD3 in these immune synapses, required for costimulation and sustained activation of T cells, preferentially triggering T helper type 2 immune response. Can act both as positive and negative regulator of homotypic or heterotypic cell-cell fusion processes. In myoblasts, associates with another tetraspanin CD9 in complex with PTGFRN and inhibits myotube fusion during muscle regeneration. In macrophages, associates with CD9 and beta-1 and beta-2 integrins, and prevents macrophage fusion into multinucleated giant cells specialized in ingesting complement-opsonized large particles. Also prevents the fusion between mononuclear cell progenitors into osteoclasts in charge of bone resorption. Positively regulates sperm-egg fusion and may be involved in the acrosome reaction. Regulates protein trafficking in intracellular compartments. In T cells, associates with dNTPase SAMHD1 and defines its subcellular location, enabling its degradation by the proteasome and thereby controlling intracellular dNTP levels. Also regulates integrin-dependent migration of macrophages, particularly relevant for inflammatory response in the lung. Functionally, (Microbial infection) Specifically required for Plasmodium yoelii infectivity of hepatocytes, controlling sporozoite entry in hepatocytes via the parasitophorous vacuole and subsequent parasite differentiation to exoerythrocytic forms. The sequence is that of CD81 antigen from Mus musculus (Mouse).